The sequence spans 404 residues: Imidazolonepropionase (404 aa).

Residues His73 and His75 each coordinate Fe(3+). Residues His73 and His75 each contribute to the Zn(2+) site. The 4-imidazolone-5-propanoate site is built by Arg82, Tyr145, and His178. Tyr145 provides a ligand contact to N-formimidoyl-L-glutamate. His243 provides a ligand contact to Fe(3+). Position 243 (His243) interacts with Zn(2+). Gln246 is a binding site for 4-imidazolone-5-propanoate. Asp318 is a binding site for Fe(3+). Asp318 contributes to the Zn(2+) binding site. Asn320 and Gly322 together coordinate N-formimidoyl-L-glutamate. Ser323 contacts 4-imidazolone-5-propanoate.

The protein belongs to the metallo-dependent hydrolases superfamily. HutI family. It depends on Zn(2+) as a cofactor. The cofactor is Fe(3+).

It is found in the cytoplasm. The catalysed reaction is 4-imidazolone-5-propanoate + H2O = N-formimidoyl-L-glutamate. It participates in amino-acid degradation; L-histidine degradation into L-glutamate; N-formimidoyl-L-glutamate from L-histidine: step 3/3. Catalyzes the hydrolytic cleavage of the carbon-nitrogen bond in imidazolone-5-propanoate to yield N-formimidoyl-L-glutamate. It is the third step in the universal histidine degradation pathway. The protein is Imidazolonepropionase of Bradyrhizobium diazoefficiens (strain JCM 10833 / BCRC 13528 / IAM 13628 / NBRC 14792 / USDA 110).